The following is a 152-amino-acid chain: Single-stranded DNA-binding protein, mitochondrial (152 aa).

A mitochondrion-targeting transit peptide spans 1–16 (MFRRPVLQVFRQFVRH). In terms of domain architecture, SSB spans 30-141 (LNRVQLLGRV…IIAGKKLVVH (112 aa)). Phosphoserine is present on residues Ser-67 and Ser-79. Lys-113 is subject to N6-acetyllysine. Lys-122 is subject to N6-succinyllysine.

As to quaternary structure, homotetramer. Interacts with MPG/AAG, through inhibition of its glycosylase activity it potentially prevents formation of DNA breaks in ssDNA, ensuring that base removal primarily occurs in dsDNA. Interacts with POLDIP2. Interacts with PRIMPOL. As to expression, expressed in all the layers of the retina (at protein level).

The protein resides in the mitochondrion. Its subcellular location is the mitochondrion matrix. It is found in the mitochondrion nucleoid. Its function is as follows. Binds preferentially and cooperatively to pyrimidine rich single-stranded DNA (ss-DNA). In vitro, required to maintain the copy number of mitochondrial DNA (mtDNA) and plays a crucial role during mtDNA replication by stimulating the activity of the replisome components POLG and TWNK at the replication fork. Promotes the activity of the gamma complex polymerase POLG, largely by organizing the template DNA and eliminating secondary structures to favor ss-DNA conformations that facilitate POLG activity. In addition it is able to promote the 5'-3' unwinding activity of the mtDNA helicase TWNK. May also function in mtDNA repair. This is Single-stranded DNA-binding protein, mitochondrial (Ssbp1) from Mus musculus (Mouse).